Consider the following 460-residue polypeptide: A-type ATP synthase subunit B (460 aa).

Belongs to the ATPase alpha/beta chains family. As to quaternary structure, has multiple subunits with at least A(3), B(3), C, D, E, F, H, I and proteolipid K(x).

The protein localises to the cell membrane. Component of the A-type ATP synthase that produces ATP from ADP in the presence of a proton gradient across the membrane. The B chain is a regulatory subunit. This is A-type ATP synthase subunit B from Thermoplasma acidophilum (strain ATCC 25905 / DSM 1728 / JCM 9062 / NBRC 15155 / AMRC-C165).